The sequence spans 233 residues: Putative peroxiredoxin (233 aa).

One can recognise a Thioredoxin domain in the interval 41–200 (AQIGKEAPEF…TIRIVKAIQF (160 aa)). Catalysis depends on Cys87, which acts as the Cysteine sulfenic acid (-SOH) intermediate.

This sequence belongs to the peroxiredoxin family. AhpC/Prx1 subfamily. In terms of assembly, homodimer; disulfide-linked, upon oxidation.

The protein localises to the cell membrane. The catalysed reaction is a hydroperoxide + [thioredoxin]-dithiol = an alcohol + [thioredoxin]-disulfide + H2O. Thiol-specific peroxidase that catalyzes the reduction of hydrogen peroxide and organic hydroperoxides to water and alcohols, respectively. Plays a role in cell protection against oxidative stress by detoxifying peroxides and as sensor of hydrogen peroxide-mediated signaling events. The sequence is that of Putative peroxiredoxin from Entamoeba histolytica (strain ATCC 30459 / HM-1:IMSS / ABRM).